The chain runs to 313 residues: Biotin synthase (313 aa).

A Radical SAM core domain is found at 28-258; that stretch reads NFGNDIELCS…LFPQARLRLS (231 aa). Positions 46, 50, and 53 each coordinate [4Fe-4S] cluster. [2Fe-2S] cluster-binding residues include C90, C121, C181, and R256.

This sequence belongs to the radical SAM superfamily. Biotin synthase family. As to quaternary structure, homodimer. It depends on [4Fe-4S] cluster as a cofactor. [2Fe-2S] cluster serves as cofactor.

The catalysed reaction is (4R,5S)-dethiobiotin + (sulfur carrier)-SH + 2 reduced [2Fe-2S]-[ferredoxin] + 2 S-adenosyl-L-methionine = (sulfur carrier)-H + biotin + 2 5'-deoxyadenosine + 2 L-methionine + 2 oxidized [2Fe-2S]-[ferredoxin]. It functions in the pathway cofactor biosynthesis; biotin biosynthesis; biotin from 7,8-diaminononanoate: step 2/2. Functionally, catalyzes the conversion of dethiobiotin (DTB) to biotin by the insertion of a sulfur atom into dethiobiotin via a radical-based mechanism. In Francisella philomiragia subsp. philomiragia (strain ATCC 25017 / CCUG 19701 / FSC 153 / O#319-036), this protein is Biotin synthase.